The chain runs to 187 residues: UPF0301 protein Pcryo_0062 (187 aa).

Belongs to the UPF0301 (AlgH) family.

In Psychrobacter cryohalolentis (strain ATCC BAA-1226 / DSM 17306 / VKM B-2378 / K5), this protein is UPF0301 protein Pcryo_0062.